Consider the following 800-residue polypeptide: Kolavenyl diphosphate synthase TPS5, chloroplastic (800 aa).

The N-terminal 75 residues, 1–75 (MSLAYSQATS…VILTAEKSVD (75 aa)), are a transit peptide targeting the chloroplast. Residue Lys-244 coordinates substrate. Mg(2+) is bound by residues Asp-375 and Asp-377. The DXDD motif signature appears at 375–378 (DVDD). Lys-461 contacts substrate.

The protein belongs to the terpene synthase family. The cofactor is Mg(2+). In terms of tissue distribution, mostly expressed in trichomes of leaves and fruits.

Its subcellular location is the plastid. The protein resides in the chloroplast. It carries out the reaction (2E,6E,10E)-geranylgeranyl diphosphate = (+)-kolavenyl diphosphate. The protein operates within secondary metabolite biosynthesis; terpenoid biosynthesis. Involved in the biosynthesis of labdane-type diterpenoid including cleroda-dienols, and peregrinol lactones and furan derivatives, dopaminergic diterpenoids that can bind to dopamine receptors in the human pituitary gland, have probably ability to lower prolactin levels, and are used to treat menstrual cycle disorders (e.g. premenstrual syndrome and mastodynia). Terpene synthase that produces kolavenyl diphosphate from geranylgeranyl diphosphate (GGPP). This chain is Kolavenyl diphosphate synthase TPS5, chloroplastic, found in Vitex agnus-castus (Chaste tree).